Here is a 299-residue protein sequence, read N- to C-terminus: Proline iminopeptidase (299 aa).

In terms of domain architecture, AB hydrolase-1 spans 29-279 (PLLLLHGGPG…SRHMAFIDEP (251 aa)). Residue Ser-105 is the Nucleophile of the active site. Asp-245 is a catalytic residue. Catalysis depends on His-272, which acts as the Proton donor.

It belongs to the peptidase S33 family.

The protein localises to the cell envelope. The enzyme catalyses Release of N-terminal proline from a peptide.. Its function is as follows. Releases the N-terminal proline from various substrates. This Levilactobacillus brevis (strain ATCC 367 / BCRC 12310 / CIP 105137 / JCM 1170 / LMG 11437 / NCIMB 947 / NCTC 947) (Lactobacillus brevis) protein is Proline iminopeptidase.